We begin with the raw amino-acid sequence, 378 residues long: O-methyltransferase gsfD (378 aa).

Residues 219–220, D244, 266–267, and R282 contribute to the S-adenosyl-L-methionine site; these read GG and DM. The active-site Proton acceptor is the H286.

Belongs to the class I-like SAM-binding methyltransferase superfamily. Cation-independent O-methyltransferase family.

It catalyses the reaction desmethyl-dehydrogriseofulvin + S-adenosyl-L-methionine = dehydrogriseofulvin + S-adenosyl-L-homocysteine + H(+). It functions in the pathway secondary metabolite biosynthesis; terpenoid biosynthesis. In terms of biological role, O-methyltransferase; part of the gene cluster that mediates the biosynthesis of griseofulvin, an important antifungal drug that has been in use for a long time for treating dermatophyte infections. The first step of the pathway is the formation of the heptaketide backbone by gsfA which is initiated by priming with acetyl-CoA, followed by sequential condensations of 6 malonyl-CoA units. The resulting benzophenone can undergo a spontaneous dehydration to form norlichexanthone. However, the true precursor for the griseofulvin biosynthesis is not norlichexanthone, but the heptaketide benzophenone that is O-methylated at 3-OH by gsfB to produce griseophenone D which is further methylated at 9-OH by gsfC to yield griseophenone C. Griseophenone C is then substrate of halogenase gsfI which is responsible for the regio-specific chlorination at the C13 position to form griseophenone B. The cytochrome P450 gsfF catalyzes the coupling of orcinol and phloroglucinol rings in griseophenone B to form desmethyl-dehydrogriseofulvin A which is further methylated at 5-OH by gsfD to yield dehydrogriseofulvin. Finally, gsfE performs stereospecific reduction of enone 18 of dehydrogriseofulvin to afford the final product griseofulvin. The sequence is that of O-methyltransferase gsfD from Penicillium aethiopicum.